The following is a 627-amino-acid chain: Serine/threonine-protein kinase Nek5 (627 aa).

The Protein kinase domain maps to 4 to 255 (FHLIKIIGEG…VTSLLKRPFL (252 aa)). ATP contacts are provided by residues 10–18 (IGEGTFGKV) and K33. D124 (proton acceptor) is an active-site residue. Residues 563–580 (QLEPGSDEDDIKFEESED) show a composition bias toward acidic residues. Disordered stretches follow at residues 563-582 (QLEP…EDEL) and 591-627 (EKLA…KKLQ). Residues 609–619 (NAEEPGEKEKT) are compositionally biased toward basic and acidic residues.

It belongs to the protein kinase superfamily. NEK Ser/Thr protein kinase family. NIMA subfamily. It depends on Mg(2+) as a cofactor.

The protein resides in the cell projection. The protein localises to the cilium. It is found in the flagellum. The enzyme catalyses L-seryl-[protein] + ATP = O-phospho-L-seryl-[protein] + ADP + H(+). It catalyses the reaction L-threonyl-[protein] + ATP = O-phospho-L-threonyl-[protein] + ADP + H(+). This is Serine/threonine-protein kinase Nek5 (Nek5) from Mus musculus (Mouse).